The chain runs to 426 residues: Histidine--tRNA ligase (426 aa).

It belongs to the class-II aminoacyl-tRNA synthetase family. Homodimer.

The protein localises to the cytoplasm. The enzyme catalyses tRNA(His) + L-histidine + ATP = L-histidyl-tRNA(His) + AMP + diphosphate + H(+). The sequence is that of Histidine--tRNA ligase from Streptococcus equi subsp. zooepidemicus (strain H70).